A 515-amino-acid chain; its full sequence is Maturase K (515 aa).

This sequence belongs to the intron maturase 2 family. MatK subfamily.

Its subcellular location is the plastid. The protein resides in the chloroplast. Usually encoded in the trnK tRNA gene intron. Probably assists in splicing its own and other chloroplast group II introns. This Picea engelmannii (Engelmann's spruce) protein is Maturase K.